A 324-amino-acid chain; its full sequence is Sex-lethal homolog (324 aa).

2 RRM domains span residues 102 to 180 and 188 to 268; these read TNLI…YARP and TNLY…LAEE.

Expressed in somatic cells of both sexes throughout development, but not in the pole cells which are the progenitors of the germline.

Its subcellular location is the nucleus. Functionally, unknown; apparently not involved in somatic sex determination. The polypeptide is Sex-lethal homolog (SXL) (Musca domestica (House fly)).